Here is a 106-residue protein sequence, read N- to C-terminus: CRISPR-associated endoribonuclease Cas2 (106 aa).

Position 8 (Asp8) interacts with Mg(2+). The disordered stretch occupies residues 86 to 106; the sequence is EEAAEAAVSYPGRSRKKARAG.

The protein belongs to the CRISPR-associated endoribonuclease Cas2 protein family. As to quaternary structure, homodimer, forms a heterotetramer with a Cas1 homodimer. Mg(2+) serves as cofactor.

Its function is as follows. CRISPR (clustered regularly interspaced short palindromic repeat), is an adaptive immune system that provides protection against mobile genetic elements (viruses, transposable elements and conjugative plasmids). CRISPR clusters contain sequences complementary to antecedent mobile elements and target invading nucleic acids. CRISPR clusters are transcribed and processed into CRISPR RNA (crRNA). Functions as a ssRNA-specific endoribonuclease. Involved in the integration of spacer DNA into the CRISPR cassette. This is CRISPR-associated endoribonuclease Cas2 from Desulforudis audaxviator (strain MP104C).